Reading from the N-terminus, the 310-residue chain is p-hydroxybenzoic acid efflux pump subunit AaeA (310 aa).

Residues 12-32 traverse the membrane as a helical segment; that stretch reads AITVVLVILAFIAIFNAWVYY.

It belongs to the membrane fusion protein (MFP) (TC 8.A.1) family.

Its subcellular location is the cell inner membrane. Its function is as follows. Forms an efflux pump with AaeB. In Escherichia coli O9:H4 (strain HS), this protein is p-hydroxybenzoic acid efflux pump subunit AaeA.